The chain runs to 294 residues: ATP synthase gamma chain (294 aa).

Belongs to the ATPase gamma chain family. As to quaternary structure, F-type ATPases have 2 components, CF(1) - the catalytic core - and CF(0) - the membrane proton channel. CF(1) has five subunits: alpha(3), beta(3), gamma(1), delta(1), epsilon(1). CF(0) has three main subunits: a, b and c.

Its subcellular location is the cell inner membrane. Produces ATP from ADP in the presence of a proton gradient across the membrane. The gamma chain is believed to be important in regulating ATPase activity and the flow of protons through the CF(0) complex. The protein is ATP synthase gamma chain of Paramagnetospirillum magneticum (strain ATCC 700264 / AMB-1) (Magnetospirillum magneticum).